Here is a 504-residue protein sequence, read N- to C-terminus: Lysine--tRNA ligase (504 aa).

Residues E411 and E418 each coordinate Mg(2+).

The protein belongs to the class-II aminoacyl-tRNA synthetase family. In terms of assembly, homodimer. The cofactor is Mg(2+).

It is found in the cytoplasm. The enzyme catalyses tRNA(Lys) + L-lysine + ATP = L-lysyl-tRNA(Lys) + AMP + diphosphate. This Clostridium botulinum (strain ATCC 19397 / Type A) protein is Lysine--tRNA ligase.